The chain runs to 242 residues: Lactate utilization protein A 2 (242 aa).

Belongs to the LutA/YkgE family.

Functionally, is involved in L-lactate degradation and allows cells to grow with lactate as the sole carbon source. This chain is Lactate utilization protein A 2, found in Bacillus cereus (strain 03BB102).